Here is a 170-residue protein sequence, read N- to C-terminus: dCTP pyrophosphatase 1 (170 aa).

Residues 1 to 25 (MSTAGDGERGTVGQEDSAAARPFRF) form a disordered region. Serine 2 carries the N-acetylserine modification. Serine 2 is subject to Phosphoserine. Substrate is bound by residues histidine 38 and 47-51 (WEQFH). Residues glutamate 63 and glutamate 66 each contribute to the Mg(2+) site. Tryptophan 73 serves as a coordination point for substrate. Positions 95 and 98 each coordinate Mg(2+). Residue tyrosine 102 coordinates substrate. Positions 150-170 (SENQAVGAGDPASELRDQAST) are disordered.

Homotetramer. Mg(2+) is required as a cofactor. In terms of tissue distribution, ubiquitous. Highly expressed in heart, liver, skeletal muscle, cerebellum, brain, and salivary gland.

It is found in the cytoplasm. The protein localises to the cytosol. The enzyme catalyses dCTP + H2O = dCMP + diphosphate + H(+). Inhibited by divalent calcium or cadmium ions. Its function is as follows. Hydrolyzes deoxynucleoside triphosphates (dNTPs) to the corresponding nucleoside monophosphates. Has a strong preference for dCTP and its analogs including 5-iodo-dCTP and 5-methyl-dCTP for which it may even have a higher efficiency. May protect DNA or RNA against the incorporation of these genotoxic nucleotide analogs through their catabolism. The sequence is that of dCTP pyrophosphatase 1 from Mus musculus (Mouse).